Reading from the N-terminus, the 317-residue chain is Protease HtpX homolog (317 aa).

Transmembrane regions (helical) follow at residues 6-26 (TAIL…AIGG) and 28-48 (GGMM…YWNS). Histidine 130 contributes to the Zn(2+) binding site. Glutamate 131 is an active-site residue. Residue histidine 134 participates in Zn(2+) binding. The next 2 helical transmembrane spans lie at 145-165 (MTAT…LFGG) and 173-193 (PFGA…AMLV). Zn(2+) is bound at residue glutamate 202. Residues 283–317 (GGGGFAPGPAPAVRPPGGNPWGVDPGGGQRRGPWG) form a disordered region. Positions 290-300 (GPAPAVRPPGG) are enriched in pro residues. Residues 306-317 (DPGGGQRRGPWG) show a composition bias toward gly residues.

Belongs to the peptidase M48B family. Requires Zn(2+) as cofactor.

It is found in the cell inner membrane. This is Protease HtpX homolog from Xanthobacter autotrophicus (strain ATCC BAA-1158 / Py2).